The chain runs to 640 residues: EF-hand domain-containing protein 1 (640 aa).

Residues 1 to 45 (MVSNPVHGLPFLPGTSFKDSTKTAFHRSQTLSYRNGYAIVRRPTV) form a required for its localization in the mitotic spindle and interaction with alpha-tubulin region. DM10 domains follow at residues 93–198 (DKKV…ESQG), 239–359 (DKQV…KEKF), and 416–520 (DNKV…ESNA). Residues 535-554 (VRKREAPAPEAESKQTEKDP) are disordered. Over residues 538–554 (REAPAPEAESKQTEKDP) the composition is skewed to basic and acidic residues. The region spanning 574 to 609 (SCKDNIREAFQIYDKEASGYVDRDMFFKICESLNVP) is the EF-hand domain.

In terms of assembly, microtubule inner protein component of sperm flagellar doublet microtubules. Interacts with the C-terminus of CACNA1E. Interacts with alpha-tubulin. As to expression, widely expressed. Not detected in lymphocytes.

The protein resides in the cytoplasm. The protein localises to the cytoskeleton. It localises to the cilium axoneme. Its subcellular location is the flagellum axoneme. It is found in the microtubule organizing center. The protein resides in the centrosome. The protein localises to the spindle. It localises to the spindle pole. Functionally, microtubule inner protein (MIP) part of the dynein-decorated doublet microtubules (DMTs) in cilia axoneme, which is required for motile cilia beating. Microtubule-associated protein which regulates cell division and neuronal migration during cortical development. Necessary for radial and tangential cell migration during brain development, possibly acting as a regulator of cell morphology and process formation during migration. May enhance calcium influx through CACNA1E and stimulate programmed cell death. The polypeptide is EF-hand domain-containing protein 1 (Homo sapiens (Human)).